A 119-amino-acid polypeptide reads, in one-letter code: Beta-2-microglobulin (119 aa).

The N-terminal stretch at Met-1–Ala-20 is a signal peptide. The region spanning Pro-25–Lys-114 is the Ig-like C1-type domain. Cys-45 and Cys-100 are joined by a disulfide.

It belongs to the beta-2-microglobulin family. Heterodimer of an alpha chain and a beta chain. Beta-2-microglobulin is the beta-chain of major histocompatibility complex class I molecules.

It localises to the secreted. Component of the class I major histocompatibility complex (MHC). Involved in the presentation of peptide antigens to the immune system. The protein is Beta-2-microglobulin (B2M) of Callithrix aurita (White-eared marmoset).